Reading from the N-terminus, the 1801-residue chain is Focadhesin (1801 aa).

At lysine 819 the chain carries N6-acetyllysine.

As to quaternary structure, interacts with VCL. As to expression, ubiquitous. High expression in brain followed by testis, muscle, pancreas, heart, ovary, small intestine, placenta, prostate, thymus, kidney, colon, liver, lung, spleen and leukocytes. Expression is reduced in most glioblastomas and all glioblastoma cell lines.

Its subcellular location is the cell junction. The protein localises to the focal adhesion. The protein resides in the cytoplasm. It is found in the cytosol. Functionally, required for the maintenance of SKIC2 and SKIC3 proteostatic levels in the liver. May be involved in the regulation of RNA degradation by the exosome complex. Potential tumor suppressor in gliomas. The protein is Focadhesin of Homo sapiens (Human).